The following is a 384-amino-acid chain: 8-amino-7-oxononanoate synthase (384 aa).

Residue arginine 23 coordinates substrate. A pyridoxal 5'-phosphate-binding site is contributed by 110 to 111 (GF). Position 135 (histidine 135) interacts with substrate. Pyridoxal 5'-phosphate is bound by residues serine 179, histidine 206, and threonine 232. Position 235 is an N6-(pyridoxal phosphate)lysine (lysine 235). Threonine 348 serves as a coordination point for substrate.

Belongs to the class-II pyridoxal-phosphate-dependent aminotransferase family. BioF subfamily. Homodimer. Pyridoxal 5'-phosphate serves as cofactor.

It catalyses the reaction 6-carboxyhexanoyl-[ACP] + L-alanine + H(+) = (8S)-8-amino-7-oxononanoate + holo-[ACP] + CO2. The protein operates within cofactor biosynthesis; biotin biosynthesis. Catalyzes the decarboxylative condensation of pimeloyl-[acyl-carrier protein] and L-alanine to produce 8-amino-7-oxononanoate (AON), [acyl-carrier protein], and carbon dioxide. The polypeptide is 8-amino-7-oxononanoate synthase (Vibrio cholerae serotype O1 (strain ATCC 39315 / El Tor Inaba N16961)).